The primary structure comprises 281 residues: 18S rRNA (guanine-N(7))-methyltransferase (281 aa).

Residues 256-281 form a disordered region; sequence KARRRRQGKEVCPDTQYTGRKRKPRF.

It belongs to the class I-like SAM-binding methyltransferase superfamily. BUD23/WBSCR22 family. As to quaternary structure, heterodimer with TRMT112; this heterodimerization is necessary for the metabolic stability and activity of the catalytic subunit BUD23. Interacts with GRIP1. May be ubiquitinated and targeted to degradation in response to pro-inflammatory cytokine signaling.

It localises to the nucleus. Its subcellular location is the nucleoplasm. The protein resides in the cytoplasm. The protein localises to the perinuclear region. It catalyses the reaction a guanosine in 18S rRNA + S-adenosyl-L-methionine = an N(7)-methylguanosine in 18S rRNA + S-adenosyl-L-homocysteine. Functionally, S-adenosyl-L-methionine-dependent methyltransferase that specifically methylates the N(7) position of a guanine in 18S rRNA. Requires the methyltransferase adapter protein TRM112 for full rRNA methyltransferase activity. Involved in the pre-rRNA processing steps leading to small-subunit rRNA production independently of its RNA-modifying catalytic activity. Important for biogenesis end export of the 40S ribosomal subunit independent on its methyltransferase activity. Locus-specific steroid receptor coactivator. Potentiates transactivation by glucocorticoid (NR3C1), mineralocorticoid (NR3C2), androgen (AR) and progesterone (PGR) receptors. Required for the maintenance of open chromatin at the TSC22D3/GILZ locus to facilitate NR3C1 loading on the response elements. Required for maintenance of dimethylation on histone H3 'Lys-79' (H3K79me2), although direct histone methyltransferase activity is not observed in vitro. The sequence is that of 18S rRNA (guanine-N(7))-methyltransferase from Bos taurus (Bovine).